A 555-amino-acid chain; its full sequence is mRNA cleavage and polyadenylation factor CLP1 (555 aa).

ATP contacts are provided by residues glutamate 30, lysine 69, and 156–161 (YLGKTS). The tract at residues 431 to 451 (DDFEHITNEDENGGDGNDGDG) is disordered.

It belongs to the Clp1 family. Clp1 subfamily. As to quaternary structure, component of a pre-mRNA cleavage factor complex. Interacts directly with PCF11.

Its subcellular location is the nucleus. In terms of biological role, required for endonucleolytic cleavage during polyadenylation-dependent pre-mRNA 3'-end formation. The chain is mRNA cleavage and polyadenylation factor CLP1 from Lodderomyces elongisporus (strain ATCC 11503 / CBS 2605 / JCM 1781 / NBRC 1676 / NRRL YB-4239) (Yeast).